A 124-amino-acid polypeptide reads, in one-letter code: Small ribosomal subunit protein uS12 (124 aa).

Asp89 carries the 3-methylthioaspartic acid modification. The interval 105 to 124 is disordered; the sequence is QGVKNRGQARSRYGAKKEKK. The segment covering 111-124 has biased composition (basic residues); that stretch reads GQARSRYGAKKEKK.

Belongs to the universal ribosomal protein uS12 family. As to quaternary structure, part of the 30S ribosomal subunit. Contacts proteins S8 and S17. May interact with IF1 in the 30S initiation complex.

Its function is as follows. With S4 and S5 plays an important role in translational accuracy. Interacts with and stabilizes bases of the 16S rRNA that are involved in tRNA selection in the A site and with the mRNA backbone. Located at the interface of the 30S and 50S subunits, it traverses the body of the 30S subunit contacting proteins on the other side and probably holding the rRNA structure together. The combined cluster of proteins S8, S12 and S17 appears to hold together the shoulder and platform of the 30S subunit. The chain is Small ribosomal subunit protein uS12 from Micrococcus luteus (Micrococcus lysodeikticus).